We begin with the raw amino-acid sequence, 125 residues long: Steroid Delta-isomerase (125 aa).

Tyr14 (proton donor) is an active-site residue. Asp38 serves as the catalytic Proton acceptor. Asp99 is a substrate binding site.

Homodimer.

The catalysed reaction is a 3-oxo-Delta(5)-steroid = a 3-oxo-Delta(4)-steroid. This chain is Steroid Delta-isomerase (ksi), found in Comamonas testosteroni (Pseudomonas testosteroni).